A 353-amino-acid chain; its full sequence is Ubiquinol oxidase 2, mitochondrial (353 aa).

The N-terminal 21 residues, 1–21 (MSQLITKAALRVLLVCGRGNC), are a transit peptide targeting the mitochondrion. The helical transmembrane segment at 178–198 (AMMLETVAAVPGMVGGMLLHL) threads the bilayer. Fe cation is bound by residues Glu-182, Glu-221, and His-224. The helical transmembrane segment at 240–260 (LLVMLVQGIFFNSFFVCYVIS) threads the bilayer. Positions 272, 323, and 326 each coordinate Fe cation.

The protein belongs to the alternative oxidase family. Homodimer; disulfide-linked. Fe cation serves as cofactor. As to expression, maximally expressed in dry seeds. Detected in roots, stems and leaves.

It is found in the mitochondrion inner membrane. It catalyses the reaction 2 a ubiquinol + O2 = 2 a ubiquinone + 2 H2O. Catalyzes the cyanide-resistant oxidation of ubiquinol and the reduction of molecular oxygen to water, but does not translocate protons and consequently is not linked to oxidative phosphorylation. May increase respiration when the cytochrome respiratory pathway is restricted, or in response to low temperatures. The chain is Ubiquinol oxidase 2, mitochondrial (AOX2) from Arabidopsis thaliana (Mouse-ear cress).